A 349-amino-acid polypeptide reads, in one-letter code: Phosphoribosylformylglycinamidine cyclo-ligase (349 aa).

It belongs to the AIR synthase family.

The protein resides in the cytoplasm. The catalysed reaction is 2-formamido-N(1)-(5-O-phospho-beta-D-ribosyl)acetamidine + ATP = 5-amino-1-(5-phospho-beta-D-ribosyl)imidazole + ADP + phosphate + H(+). The protein operates within purine metabolism; IMP biosynthesis via de novo pathway; 5-amino-1-(5-phospho-D-ribosyl)imidazole from N(2)-formyl-N(1)-(5-phospho-D-ribosyl)glycinamide: step 2/2. The protein is Phosphoribosylformylglycinamidine cyclo-ligase of Psychrobacter cryohalolentis (strain ATCC BAA-1226 / DSM 17306 / VKM B-2378 / K5).